The chain runs to 755 residues: Photosystem I P700 chlorophyll a apoprotein A1 (755 aa).

Transmembrane regions (helical) follow at residues isoleucine 72–alanine 95, leucine 158–histidine 181, leucine 197–isoleucine 221, glutamine 297–tyrosine 315, tryptophan 352–tyrosine 375, isoleucine 391–valine 417, alanine 439–histidine 461, and phenylalanine 536–leucine 554. 2 residues coordinate [4Fe-4S] cluster: cysteine 578 and cysteine 587. 2 helical membrane-spanning segments follow: residues histidine 594 to tryptophan 615 and leucine 669 to phenylalanine 691. Histidine 680 contacts chlorophyll a'. Chlorophyll a contacts are provided by methionine 688 and tyrosine 696. Tryptophan 697 is a phylloquinone binding site. The helical transmembrane segment at alanine 729–alanine 749 threads the bilayer.

Belongs to the PsaA/PsaB family. The PsaA/B heterodimer binds the P700 chlorophyll special pair and subsequent electron acceptors. PSI consists of a core antenna complex that captures photons, and an electron transfer chain that converts photonic excitation into a charge separation. The cyanobacterial PSI reaction center is composed of one copy each of PsaA,B,C,D,E,F,I,J,K,L,M and X, and forms trimeric complexes. Requires PSI electron transfer chain: 5 chlorophyll a, 1 chlorophyll a', 2 phylloquinones and 3 4Fe-4S clusters. PSI core antenna: 90 chlorophyll a, 22 carotenoids, 3 phospholipids and 1 galactolipid. P700 is a chlorophyll a/chlorophyll a' dimer, A0 is one or more chlorophyll a, A1 is one or both phylloquinones and FX is a shared 4Fe-4S iron-sulfur center. as cofactor.

The protein resides in the cellular thylakoid membrane. The catalysed reaction is reduced [plastocyanin] + hnu + oxidized [2Fe-2S]-[ferredoxin] = oxidized [plastocyanin] + reduced [2Fe-2S]-[ferredoxin]. Its function is as follows. PsaA and PsaB bind P700, the primary electron donor of photosystem I (PSI), as well as the electron acceptors A0, A1 and FX. PSI is a plastocyanin/cytochrome c6-ferredoxin oxidoreductase, converting photonic excitation into a charge separation, which transfers an electron from the donor P700 chlorophyll pair to the spectroscopically characterized acceptors A0, A1, FX, FA and FB in turn. Oxidized P700 is reduced on the lumenal side of the thylakoid membrane by plastocyanin or cytochrome c6. This is Photosystem I P700 chlorophyll a apoprotein A1 from Synechococcus sp. (strain JA-3-3Ab) (Cyanobacteria bacterium Yellowstone A-Prime).